Reading from the N-terminus, the 184-residue chain is Shikimate kinase (184 aa).

Residue 17–22 (GAGKTT) participates in ATP binding. A Mg(2+)-binding site is contributed by threonine 21. Positions 39, 63, and 85 each coordinate substrate. Arginine 123 contributes to the ATP binding site. Arginine 142 is a binding site for substrate.

The protein belongs to the shikimate kinase family. In terms of assembly, monomer. Mg(2+) is required as a cofactor.

It is found in the cytoplasm. The enzyme catalyses shikimate + ATP = 3-phosphoshikimate + ADP + H(+). It participates in metabolic intermediate biosynthesis; chorismate biosynthesis; chorismate from D-erythrose 4-phosphate and phosphoenolpyruvate: step 5/7. Functionally, catalyzes the specific phosphorylation of the 3-hydroxyl group of shikimic acid using ATP as a cosubstrate. The chain is Shikimate kinase from Burkholderia thailandensis (strain ATCC 700388 / DSM 13276 / CCUG 48851 / CIP 106301 / E264).